A 427-amino-acid chain; its full sequence is GTPase Obg (427 aa).

Residues 1–158 (MFVDQVKIYV…RDVTLELKVL (158 aa)) enclose the Obg domain. The OBG-type G domain occupies 159–329 (ADVGLVGFPS…LLFEVANLLE (171 aa)). GTP contacts are provided by residues 165–172 (GFPSVGKS), 190–194 (FTTIV), 212–215 (DLPG), 282–285 (NKMD), and 310–312 (SAV). Residues Ser172 and Thr192 each contribute to the Mg(2+) site. Positions 349–427 (YKFESESNFE…ILEYQFEFID (79 aa)) constitute an OCT domain.

The protein belongs to the TRAFAC class OBG-HflX-like GTPase superfamily. OBG GTPase family. In terms of assembly, monomer. Requires Mg(2+) as cofactor.

The protein resides in the cytoplasm. Functionally, an essential GTPase which binds GTP, GDP and possibly (p)ppGpp with moderate affinity, with high nucleotide exchange rates and a fairly low GTP hydrolysis rate. Plays a role in control of the cell cycle, stress response, ribosome biogenesis and in those bacteria that undergo differentiation, in morphogenesis control. This is GTPase Obg from Bacillus mycoides (strain KBAB4) (Bacillus weihenstephanensis).